A 1072-amino-acid polypeptide reads, in one-letter code: DNA-directed RNA polymerase subunit beta (1072 aa).

It belongs to the RNA polymerase beta chain family. In plastids the minimal PEP RNA polymerase catalytic core is composed of four subunits: alpha, beta, beta', and beta''. When a (nuclear-encoded) sigma factor is associated with the core the holoenzyme is formed, which can initiate transcription.

It localises to the plastid. Its subcellular location is the chloroplast. It carries out the reaction RNA(n) + a ribonucleoside 5'-triphosphate = RNA(n+1) + diphosphate. Its function is as follows. DNA-dependent RNA polymerase catalyzes the transcription of DNA into RNA using the four ribonucleoside triphosphates as substrates. The polypeptide is DNA-directed RNA polymerase subunit beta (Eucalyptus globulus subsp. globulus (Tasmanian blue gum)).